The sequence spans 189 residues: Small ribosomal subunit protein uS4 (189 aa).

The 75-residue stretch at 107–181 folds into the S4 RNA-binding domain; sequence RRLQTQVFKL…VKRRTLRKGD (75 aa). Residues 161–189 are disordered; it reads QSPYGGGRPGRVKRRTLRKGDGAGGDDEE.

Belongs to the universal ribosomal protein uS4 family. Component of the small ribosomal subunit. Part of the small subunit (SSU) processome, composed of more than 70 proteins and the RNA chaperone small nucleolar RNA (snoRNA) U3.

It is found in the cytoplasm. It localises to the nucleus. The protein resides in the nucleolus. Component of the small ribosomal subunit. The ribosome is a large ribonucleoprotein complex responsible for the synthesis of proteins in the cell. Part of the small subunit (SSU) processome, first precursor of the small eukaryotic ribosomal subunit. During the assembly of the SSU processome in the nucleolus, many ribosome biogenesis factors, an RNA chaperone and ribosomal proteins associate with the nascent pre-rRNA and work in concert to generate RNA folding, modifications, rearrangements and cleavage as well as targeted degradation of pre-ribosomal RNA by the RNA exosome. The chain is Small ribosomal subunit protein uS4 (rps-9) from Caenorhabditis elegans.